A 147-amino-acid polypeptide reads, in one-letter code: Secreted hemophore CSA2 (147 aa).

Positions 1 to 20 (MKFSTILAIPFAIAFANAAA) are cleaved as a signal peptide. The CFEM domain maps to 34 to 145 (NPYTIYPPVP…SALDAAATAT (112 aa)). 4 cysteine pairs are disulfide-bonded: cysteine 62-cysteine 102, cysteine 66-cysteine 97, cysteine 76-cysteine 83, and cysteine 85-cysteine 118. Aspartate 80 serves as a coordination point for heme.

This sequence belongs to the RBT5 family. As to quaternary structure, homodimer. The possibility of a transient honotrimer assembly of the holo protein is not ruled out.

The protein localises to the secreted. Its function is as follows. Secreted heme-binding protein involved in the utilization of iron from human hemoglobin during hyphal growth. May also play a role in non-hemoglobin iron utilization. Heme transfer occurs between PGA7, RBT5 and CSA2 supporting a model in which the 3 CFEM proteins cooperate in a heme-acquisition system and form a cross-cell wall heme-transfer cascade. The ability to acquire iron from host tissues is a major virulence factor of pathogenic microorganisms. This is Secreted hemophore CSA2 (CSA2) from Candida albicans (strain SC5314 / ATCC MYA-2876) (Yeast).